A 277-amino-acid polypeptide reads, in one-letter code: uncharacterized protein (277 aa).

A disordered region spans residues 256–277 (HTTTTTTSPSFTIPSNSSKGVS).

Functionally, this protein may be involved in virus assembly. Essential for virus function. This is an uncharacterized protein from Saccharolobus solfataricus (Sulfolobus solfataricus).